The following is a 447-amino-acid chain: Phospholipase A(1) LCAT3 (447 aa).

Residue Ser177 is the Acyl-ester intermediate of the active site. Residues Asp384 and His409 each act as charge relay system in the active site.

The protein belongs to the AB hydrolase superfamily. Lipase family.

The protein localises to the microsome membrane. The enzyme catalyses a 1,2-diacyl-sn-glycero-3-phosphocholine + H2O = a 2-acyl-sn-glycero-3-phosphocholine + a fatty acid + H(+). Hydrolyzes the sn-1 acylester bond of phospholipids. Phosphatidylcholine, phosphatidylethanolamine and phosphatidic acid can be used as substrates. Weak activity with lysophosphatidylcholine and no activity with tripalmitoylglycerol and cholesteryl oleate. Seems to have a preference for unsaturated fatty acids at the sn-1 position. This is Phospholipase A(1) LCAT3 (LCAT3) from Arabidopsis thaliana (Mouse-ear cress).